Here is a 504-residue protein sequence, read N- to C-terminus: Ribosomal protein uS12 methylthiotransferase RimO (504 aa).

The MTTase N-terminal domain maps to 21–131 (KRVGFISLGC…VMGHVRELLP (111 aa)). [4Fe-4S] cluster-binding residues include Cys-30, Cys-66, Cys-95, Cys-186, Cys-190, and Cys-193. The Radical SAM core domain maps to 172–408 (LTPRHYAYVK…MEVAQRISTE (237 aa)). A TRAM domain is found at 411–487 (SEKVGRVMDV…EYDLFGEVIE (77 aa)).

Belongs to the methylthiotransferase family. RimO subfamily. It depends on [4Fe-4S] cluster as a cofactor.

It is found in the cytoplasm. It catalyses the reaction L-aspartate(89)-[ribosomal protein uS12]-hydrogen + (sulfur carrier)-SH + AH2 + 2 S-adenosyl-L-methionine = 3-methylsulfanyl-L-aspartate(89)-[ribosomal protein uS12]-hydrogen + (sulfur carrier)-H + 5'-deoxyadenosine + L-methionine + A + S-adenosyl-L-homocysteine + 2 H(+). Catalyzes the methylthiolation of an aspartic acid residue of ribosomal protein uS12. This Deinococcus radiodurans (strain ATCC 13939 / DSM 20539 / JCM 16871 / CCUG 27074 / LMG 4051 / NBRC 15346 / NCIMB 9279 / VKM B-1422 / R1) protein is Ribosomal protein uS12 methylthiotransferase RimO.